A 647-amino-acid chain; its full sequence is Threonine--tRNA ligase (647 aa).

One can recognise a TGS domain in the interval 1–61 (MIKITFPDGA…TEDGSIEIVT (61 aa)). Residues 242-540 (DHRKLGKELD…LIENYKGAFP (299 aa)) are catalytic. Positions 336, 387, and 517 each coordinate Zn(2+).

This sequence belongs to the class-II aminoacyl-tRNA synthetase family. Homodimer. The cofactor is Zn(2+).

It is found in the cytoplasm. The catalysed reaction is tRNA(Thr) + L-threonine + ATP = L-threonyl-tRNA(Thr) + AMP + diphosphate + H(+). In terms of biological role, catalyzes the attachment of threonine to tRNA(Thr) in a two-step reaction: L-threonine is first activated by ATP to form Thr-AMP and then transferred to the acceptor end of tRNA(Thr). Also edits incorrectly charged L-seryl-tRNA(Thr). The chain is Threonine--tRNA ligase from Streptococcus gordonii (strain Challis / ATCC 35105 / BCRC 15272 / CH1 / DL1 / V288).